Consider the following 146-residue polypeptide: Hemoglobin subunit delta (146 aa).

The Globin domain maps to 2-146; sequence HLTGEEKSAV…VATALAHKYH (145 aa). Ser-50 carries the post-translational modification Phosphoserine. 2 residues coordinate heme b: His-63 and His-92.

Belongs to the globin family. In terms of assembly, heterotetramer of two delta chains and two alpha chains. As to expression, red blood cells.

This chain is Hemoglobin subunit delta (HBD), found in Leontocebus nigricollis (Black-mantled tamarin).